A 103-amino-acid polypeptide reads, in one-letter code: Large ribosomal subunit protein bL21 (103 aa).

The protein belongs to the bacterial ribosomal protein bL21 family. As to quaternary structure, part of the 50S ribosomal subunit. Contacts protein L20.

In terms of biological role, this protein binds to 23S rRNA in the presence of protein L20. This chain is Large ribosomal subunit protein bL21, found in Bordetella parapertussis (strain 12822 / ATCC BAA-587 / NCTC 13253).